A 234-amino-acid chain; its full sequence is ATP synthase subunit a 1 (234 aa).

6 helical membrane passes run 29–49 (FLVH…VALL), 90–110 (LIAT…IPGF), 116–136 (NLNT…VVGV), 147–167 (FVGP…IGHL), 186–206 (IVLV…MMLM), and 207–227 (GILV…IYIA).

The protein belongs to the ATPase A chain family. As to quaternary structure, F-type ATPases have 2 components, CF(1) - the catalytic core - and CF(0) - the membrane proton channel. CF(1) has five subunits: alpha(3), beta(3), gamma(1), delta(1), epsilon(1). CF(0) has three main subunits: a(1), b(2) and c(9-12). The alpha and beta chains form an alternating ring which encloses part of the gamma chain. CF(1) is attached to CF(0) by a central stalk formed by the gamma and epsilon chains, while a peripheral stalk is formed by the delta and b chains.

Its subcellular location is the cell inner membrane. Its function is as follows. Key component of the proton channel; it plays a direct role in the translocation of protons across the membrane. The protein is ATP synthase subunit a 1 of Syntrophotalea carbinolica (strain DSM 2380 / NBRC 103641 / GraBd1) (Pelobacter carbinolicus).